Here is an 811-residue protein sequence, read N- to C-terminus: Probable glutamine--tRNA ligase (811 aa).

The disordered stretch occupies residues 190–217; it reads DAAAGKKKGAKAKNSKQKTVDSGKAKEQ. Over residues 194 to 205 the composition is skewed to basic residues; the sequence is GKKKGAKAKNSK. Over residues 207–217 the composition is skewed to basic and acidic residues; it reads KTVDSGKAKEQ. The 'HIGH' region motif lies at 269-279; sequence PEPNGYLHIGH. Residues 270–272 and 276–282 contribute to the ATP site; these read EPN and HIGHSKA. Positions 302 and 447 each coordinate L-glutamine. Residues threonine 466, 495–496, and 503–505 each bind ATP; these read RL and MSK. Residues 502–506 carry the 'KMSKS' region motif; the sequence is LMSKR.

The protein belongs to the class-I aminoacyl-tRNA synthetase family.

The protein resides in the cytoplasm. The enzyme catalyses tRNA(Gln) + L-glutamine + ATP = L-glutaminyl-tRNA(Gln) + AMP + diphosphate. This is Probable glutamine--tRNA ligase (qrs1) from Schizosaccharomyces pombe (strain 972 / ATCC 24843) (Fission yeast).